A 103-amino-acid polypeptide reads, in one-letter code: Large ribosomal subunit protein bL21 (103 aa).

It belongs to the bacterial ribosomal protein bL21 family. Part of the 50S ribosomal subunit. Contacts protein L20.

Its function is as follows. This protein binds to 23S rRNA in the presence of protein L20. In Vibrio parahaemolyticus serotype O3:K6 (strain RIMD 2210633), this protein is Large ribosomal subunit protein bL21.